Consider the following 191-residue polypeptide: Ribonuclease M5 1 (191 aa).

Positions 10–93 (KEVIVVEGKD…AFLTKHDAAP (84 aa)) constitute a Toprim domain. The Mg(2+) site is built by E16, D62, and D64.

The protein belongs to the ribonuclease M5 family. Requires Mg(2+) as cofactor.

Its subcellular location is the cytoplasm. It catalyses the reaction Endonucleolytic cleavage of RNA, removing 21 and 42 nucleotides, respectively, from the 5'- and 3'-termini of a 5S-rRNA precursor.. In terms of biological role, required for correct processing of both the 5' and 3' ends of 5S rRNA precursor. Cleaves both sides of a double-stranded region yielding mature 5S rRNA in one step. The protein is Ribonuclease M5 1 of Ligilactobacillus salivarius (strain CECT 5713) (Lactobacillus salivarius).